A 261-amino-acid polypeptide reads, in one-letter code: Triosephosphate isomerase (261 aa).

10-12 (NWK) is a binding site for substrate. His-100 functions as the Electrophile in the catalytic mechanism. Glu-172 (proton acceptor) is an active-site residue. Residues Gly-178, Ser-218, and 239 to 240 (GG) each bind substrate.

It belongs to the triosephosphate isomerase family. In terms of assembly, homodimer.

The protein localises to the cytoplasm. The enzyme catalyses D-glyceraldehyde 3-phosphate = dihydroxyacetone phosphate. Its pathway is carbohydrate biosynthesis; gluconeogenesis. It participates in carbohydrate degradation; glycolysis; D-glyceraldehyde 3-phosphate from glycerone phosphate: step 1/1. Its function is as follows. Involved in the gluconeogenesis. Catalyzes stereospecifically the conversion of dihydroxyacetone phosphate (DHAP) to D-glyceraldehyde-3-phosphate (G3P). The chain is Triosephosphate isomerase from Mycobacterium leprae (strain TN).